We begin with the raw amino-acid sequence, 443 residues long: Anamorsin homolog (443 aa).

The tract at residues 136–301 is N-terminal SAM-like domain; sequence LSSAPRVLVL…AAGVADALSG (166 aa). Positions 302 to 331 are linker; the sequence is NRGALPNGTAQTDGDDFIDESTLIDPTESY. 4 residues coordinate [2Fe-2S] cluster: C341, C348, C351, and C353. Residues 341–353 form a fe-S binding site A region; that stretch reads CASRPKACPNCTC. [4Fe-4S] cluster-binding residues include C380, C383, C391, and C394. 2 short sequence motifs (cx2C motif) span residues 380–383 and 391–394; these read CGNC and CAGC. The segment at 380-394 is fe-S binding site B; sequence CGNCYLGDAFRCAGC.

It belongs to the anamorsin family. Monomer. It depends on [2Fe-2S] cluster as a cofactor. Requires [4Fe-4S] cluster as cofactor.

Its subcellular location is the cytoplasm. It is found in the mitochondrion intermembrane space. Component of the cytosolic iron-sulfur (Fe-S) protein assembly (CIA) machinery. Required for the maturation of extramitochondrial Fe-S proteins. Part of an electron transfer chain functioning in an early step of cytosolic Fe-S biogenesis, facilitating the de novo assembly of a [4Fe-4S] cluster on the cytosolic Fe-S scaffold complex. Electrons are transferred from NADPH via a FAD- and FMN-containing diflavin oxidoreductase. Together with the diflavin oxidoreductase, also required for the assembly of the diferric tyrosyl radical cofactor of ribonucleotide reductase (RNR), probably by providing electrons for reduction during radical cofactor maturation in the catalytic small subunit. In Toxoplasma gondii (strain ATCC 50861 / VEG), this protein is Anamorsin homolog.